A 133-amino-acid polypeptide reads, in one-letter code: Holo-[acyl-carrier-protein] synthase (133 aa).

Residues aspartate 8 and glutamate 57 each contribute to the Mg(2+) site.

This sequence belongs to the P-Pant transferase superfamily. AcpS family. Mg(2+) is required as a cofactor.

The protein localises to the cytoplasm. The enzyme catalyses apo-[ACP] + CoA = holo-[ACP] + adenosine 3',5'-bisphosphate + H(+). Functionally, transfers the 4'-phosphopantetheine moiety from coenzyme A to a Ser of acyl-carrier-protein. This chain is Holo-[acyl-carrier-protein] synthase, found in Bartonella bacilliformis (strain ATCC 35685 / KC583 / Herrer 020/F12,63).